Here is a 469-residue protein sequence, read N- to C-terminus: Protein DETOXIFICATION 18 (469 aa).

The next 12 helical transmembrane spans lie at 40 to 60 (LPMIFTNLFYYCIPLTSVMFA), 73 to 93 (LANSWATVTGFAFMTGLSGAL), 121 to 141 (LVFTILITILWFFTESVFLLL), 152 to 172 (ALYMKYLAPGLLAYGFLQNIL), 183 to 203 (PLVLFSFLPLVINIGTTYALV), 206 to 226 (AGLGFIGAPIATSISLWIAFV), 252 to 274 (HVVLNLTLSIPSAAMVCLEYWAF), 293 to 313 (LVAICVNTESISYMLTCGLSA), 344 to 364 (VLALGVVIAILVGHDAWVGLF), 374 to 394 (FASLRFFLAASITLDSIQGVL), 406 to 426 (LATVINLGTFYLIGMPISVLC), and 438 to 458 (WIGLICGMFCQSASLLLMTIF).

This sequence belongs to the multi antimicrobial extrusion (MATE) (TC 2.A.66.1) family.

It localises to the membrane. The chain is Protein DETOXIFICATION 18 from Arabidopsis thaliana (Mouse-ear cress).